Here is an 872-residue protein sequence, read N- to C-terminus: MKTMTSAEVRQMFLDFFKSKGHTVEPSQSLVPVNDPTLLWINSGVATLKKYFDGSVVPENPRLTNAQKAIRTNDIENVGKTARHHTMFEMLGNFSIGDYFRNEAIAFAWELLTSSEWFEFPAEKLYITYYPADKDTYNRWVEVGVDPTHLVPIEDNFWEIGAGPSGPDTEIFFDRGEIYDPEHVGLKLLAEDIENDRYIEIWNIVLSQFNANPAIPRSEYPELPQKNIDTGMGLERMVCIIQGGKTNFDTDLFLPIIREIEKLSGITYSPDSENMSFKVIADHIRSLSFAIGDGALPGNEGRGYVLRRLLRRAVMHGKKLGIQGKFLASLVPTVGKIMQSYYPEVLEKEDFIMQIIDREEETFNRTIDAGQKLIDELLVNLKAEGKDRIEGADIFRLYDTYGFPVELTEELAEDEGFKIDHEGFKVAMKAQQDRARAAVVKGGSMGAQNETLSSIEVDSKFLYEDKKSQAKLLVAIKDDELVDEVTGKAQLVFDVTPFYAEMGGQVADHGVIKNADGQEVATVLDVQHAPHGQNLHSVETTSPLKVGETYTLEIDEERRSAVVKNHTATHLLHAALHNIVGNHALQAGSLNEVEFLRFDFTHFAQVTKEELAEIERQVNEVIWQSLKVETIETDIATAKEMGAMALFGEKYGKNVRVVKIGDYSIELCGGTHTQTTSQIGLFKIIKEEGIGSGVRRIIAVTGQKAYEAFKDAENTLSEVAGLVKAPQASQIVAKVSNLQDELKAAQKENDALAGKLAASQSDEIFKNVQRAGSVSFIASQVTVPDANGLRNLADIWKQKELSDVLVLVATIGEKVSLLVASKSSDVKAGNLVKELAPFVDGRGGGKPDMAMAGGSNAAGIPELLTAVAEKLG.

4 residues coordinate Zn(2+): H566, H570, C668, and H672.

This sequence belongs to the class-II aminoacyl-tRNA synthetase family. Zn(2+) serves as cofactor.

It is found in the cytoplasm. The catalysed reaction is tRNA(Ala) + L-alanine + ATP = L-alanyl-tRNA(Ala) + AMP + diphosphate. Catalyzes the attachment of alanine to tRNA(Ala) in a two-step reaction: alanine is first activated by ATP to form Ala-AMP and then transferred to the acceptor end of tRNA(Ala). Also edits incorrectly charged Ser-tRNA(Ala) and Gly-tRNA(Ala) via its editing domain. This Lactococcus lactis subsp. cremoris (strain SK11) protein is Alanine--tRNA ligase.